The following is a 292-amino-acid chain: 4-diphosphocytidyl-2-C-methyl-D-erythritol kinase (292 aa).

K10 is an active-site residue. Residue 100-110 (PIGSGLGGGSS) coordinates ATP. D142 is an active-site residue.

Belongs to the GHMP kinase family. IspE subfamily. Homodimer.

It catalyses the reaction 4-CDP-2-C-methyl-D-erythritol + ATP = 4-CDP-2-C-methyl-D-erythritol 2-phosphate + ADP + H(+). The protein operates within isoprenoid biosynthesis; isopentenyl diphosphate biosynthesis via DXP pathway; isopentenyl diphosphate from 1-deoxy-D-xylulose 5-phosphate: step 3/6. Catalyzes the phosphorylation of the position 2 hydroxy group of 4-diphosphocytidyl-2C-methyl-D-erythritol. The protein is 4-diphosphocytidyl-2-C-methyl-D-erythritol kinase of Buchnera aphidicola subsp. Schizaphis graminum (strain Sg).